We begin with the raw amino-acid sequence, 470 residues long: Neuraminidase (470 aa).

The Intravirion portion of the chain corresponds to 1 to 14 (MNPNQKIITIGSIS). Positions 11–32 (GSISLGLVVFNVLLHVVSIIVT) are involved in apical transport and lipid raft association. A helical membrane pass occupies residues 15-35 (LGLVVFNVLLHVVSIIVTVLV). The tract at residues 32–86 (TVLVLGKGGNNGICNETVVREYNETVRIEKVTQWHNTNVVEYVPYWNGGTYMNNT) is hypervariable stalk region. The Virion surface segment spans residues 36 to 470 (LGKGGNNGIC…AILPFDIDKM (435 aa)). Residues Asn-46, Asn-54, and Asn-84 are each glycosylated (N-linked (GlcNAc...) asparagine; by host). The tract at residues 89–470 (ICDAKGFAPF…AILPFDIDKM (382 aa)) is head of neuraminidase. 8 disulfides stabilise this stretch: Cys-90/Cys-417, Cys-122/Cys-127, Cys-182/Cys-229, Cys-231/Cys-236, Cys-277/Cys-290, Cys-279/Cys-288, Cys-316/Cys-335, and Cys-421/Cys-446. Residue Arg-116 coordinates substrate. The N-linked (GlcNAc...) asparagine; by host glycan is linked to Asn-144. Residue Asp-149 is the Proton donor/acceptor of the active site. Arg-150 lines the substrate pocket. Substrate is bound at residue 275 to 276 (EE). Residue Arg-291 coordinates substrate. Residues Asp-292, Gly-296, and Asp-322 each contribute to the Ca(2+) site. Arg-368 is a substrate binding site. Residue Asn-398 is glycosylated (N-linked (GlcNAc...) asparagine; by host). Tyr-402 acts as the Nucleophile in catalysis.

This sequence belongs to the glycosyl hydrolase 34 family. Homotetramer. Ca(2+) is required as a cofactor. In terms of processing, N-glycosylated.

The protein resides in the virion membrane. Its subcellular location is the host apical cell membrane. It carries out the reaction Hydrolysis of alpha-(2-&gt;3)-, alpha-(2-&gt;6)-, alpha-(2-&gt;8)- glycosidic linkages of terminal sialic acid residues in oligosaccharides, glycoproteins, glycolipids, colominic acid and synthetic substrates.. Inhibited by the neuraminidase inhibitors zanamivir (Relenza) and oseltamivir (Tamiflu). These drugs interfere with the release of progeny virus from infected cells and are effective against all influenza strains. Resistance to neuraminidase inhibitors is quite rare. In terms of biological role, catalyzes the removal of terminal sialic acid residues from viral and cellular glycoconjugates. Cleaves off the terminal sialic acids on the glycosylated HA during virus budding to facilitate virus release. Additionally helps virus spread through the circulation by further removing sialic acids from the cell surface. These cleavages prevent self-aggregation and ensure the efficient spread of the progeny virus from cell to cell. Otherwise, infection would be limited to one round of replication. Described as a receptor-destroying enzyme because it cleaves a terminal sialic acid from the cellular receptors. May facilitate viral invasion of the upper airways by cleaving the sialic acid moieties on the mucin of the airway epithelial cells. Likely to plays a role in the budding process through its association with lipid rafts during intracellular transport. May additionally display a raft-association independent effect on budding. Plays a role in the determination of host range restriction on replication and virulence. Sialidase activity in late endosome/lysosome traffic seems to enhance virus replication. The sequence is that of Neuraminidase from Influenza A virus (strain A/Duck/Ukraine/1/1963 H3N8).